The chain runs to 557 residues: DNA ligase (557 aa).

Glu-249 contacts ATP. Lys-251 serves as the catalytic N6-AMP-lysine intermediate. Residues Arg-256, Arg-271, Glu-301, Phe-340, Arg-417, and Lys-423 each coordinate ATP.

Belongs to the ATP-dependent DNA ligase family. The cofactor is Mg(2+).

The enzyme catalyses ATP + (deoxyribonucleotide)n-3'-hydroxyl + 5'-phospho-(deoxyribonucleotide)m = (deoxyribonucleotide)n+m + AMP + diphosphate.. Functionally, DNA ligase that seals nicks in double-stranded DNA during DNA replication, DNA recombination and DNA repair. This Methanothermobacter thermautotrophicus (Methanobacterium thermoformicicum) protein is DNA ligase.